A 126-amino-acid chain; its full sequence is Antimicrobial protein 1 (126 aa).

The signal sequence occupies residues 1–24; the sequence is MRSSLLLGLTVVLLLGVTVPPCMA.

In terms of tissue distribution, strongly expressed in gills, hemocytes and reproductive tract, with weaker expression in muscle, heart and digestive tract. Not detected in eyes and hepatopancreas (at protein level).

The protein resides in the secreted. In terms of biological role, has antibacterial activity against the Gram-positive bacteria E.coli (MIC&lt;50 ug/ml) and P.aeruginosa (MIC&lt;25 ug/ml), and the Gram-negative bacteria S.aureus (MIC&lt;100 ug/ml) and S.pyogenes (MIC&lt;50 ug/ml). The polypeptide is Antimicrobial protein 1 (Scylla serrata (Mud crab)).